The chain runs to 220 residues: Ribose-5-phosphate isomerase A (220 aa).

Substrate-binding positions include 25 to 28, 80 to 83, and 93 to 96; these read TGST, DGAD, and KGGG. The active-site Proton acceptor is the glutamate 102. Lysine 120 is a binding site for substrate.

It belongs to the ribose 5-phosphate isomerase family. As to quaternary structure, homodimer.

It carries out the reaction aldehydo-D-ribose 5-phosphate = D-ribulose 5-phosphate. It functions in the pathway carbohydrate degradation; pentose phosphate pathway; D-ribose 5-phosphate from D-ribulose 5-phosphate (non-oxidative stage): step 1/1. In terms of biological role, catalyzes the reversible conversion of ribose-5-phosphate to ribulose 5-phosphate. The protein is Ribose-5-phosphate isomerase A of Bacillus cereus (strain ATCC 10987 / NRS 248).